We begin with the raw amino-acid sequence, 108 residues long: UPF0060 membrane protein KPN78578_15550 (108 aa).

Helical transmembrane passes span 6 to 26, 29 to 49, 61 to 81, and 86 to 106; these read LLFF…WLWL, GATP…VWLL, AAYG…VDGV, and YDWA…AGWG.

It belongs to the UPF0060 family.

Its subcellular location is the cell inner membrane. In Klebsiella pneumoniae subsp. pneumoniae (strain ATCC 700721 / MGH 78578), this protein is UPF0060 membrane protein KPN78578_15550.